The chain runs to 140 residues: Large-conductance mechanosensitive channel 3 (140 aa).

A run of 3 helical transmembrane segments spans residues Phe8 to Gly28, Ile30 to Leu50, and Gly81 to Val101.

The protein belongs to the MscL family. Homopentamer.

The protein resides in the cell inner membrane. In terms of biological role, channel that opens in response to stretch forces in the membrane lipid bilayer. May participate in the regulation of osmotic pressure changes within the cell. This chain is Large-conductance mechanosensitive channel 3, found in Mesorhizobium japonicum (strain LMG 29417 / CECT 9101 / MAFF 303099) (Mesorhizobium loti (strain MAFF 303099)).